Consider the following 410-residue polypeptide: Mating-type locus allele B7 protein (410 aa).

Residues 1–110 form a variable domain between B alleles region; the sequence is MSSDPNFSLT…VNVGSPAVGC (110 aa). A DNA-binding region (homeobox; TALE-type) is located at residues 107–184; it reads AVGCRNLSED…NARRRSGWSH (78 aa). The highly conserved between B alleles stretch occupies residues 111 to 410; sequence RNLSEDLPAY…PFLCLSVAFV (300 aa). 3 disordered regions span residues 202 to 225, 278 to 336, and 374 to 394; these read RAKL…SNNL, TPKP…PELS, and ARGN…QPDE. A Nuclear localization signal motif is present at residues 276–308; that stretch reads KKTPKPGMPRPVTTVAKRQPARKTKPAAKPNSR. Residues 306 to 336 are compositionally biased toward polar residues; that stretch reads NSRTANPRASTTPSIDSTLDSSKLESTPELS. The interval 333-410 is not essential for B7 function; that stretch reads PELSMCSTAD…PFLCLSVAFV (78 aa). Over residues 375-388 the composition is skewed to basic residues; sequence RGNRKVKALPKRAG.

The protein belongs to the TALE/M-ATYP homeobox family.

The protein resides in the nucleus. Functionally, the B locus has at least 25 alleles, and any combination of two different B alleles yields a multimeric regulatory protein, that activates genes responsible for the pathogenicity and for the sexual development of the fungus within the corn plant. The sequence is that of Mating-type locus allele B7 protein from Mycosarcoma maydis (Corn smut fungus).